The sequence spans 487 residues: Glutamyl-tRNA(Gln) amidotransferase subunit A (487 aa).

Active-site charge relay system residues include K74 and S149. Residue S173 is the Acyl-ester intermediate of the active site.

This sequence belongs to the amidase family. GatA subfamily. In terms of assembly, heterotrimer of A, B and C subunits.

It carries out the reaction L-glutamyl-tRNA(Gln) + L-glutamine + ATP + H2O = L-glutaminyl-tRNA(Gln) + L-glutamate + ADP + phosphate + H(+). Functionally, allows the formation of correctly charged Gln-tRNA(Gln) through the transamidation of misacylated Glu-tRNA(Gln) in organisms which lack glutaminyl-tRNA synthetase. The reaction takes place in the presence of glutamine and ATP through an activated gamma-phospho-Glu-tRNA(Gln). The sequence is that of Glutamyl-tRNA(Gln) amidotransferase subunit A from Synechococcus sp. (strain CC9311).